Reading from the N-terminus, the 906-residue chain is Envelope glycoprotein B (906 aa).

The first 31 residues, 1–31 (MESRIWCLVVCVNLCIVCLGAAVSSSSTSHA), serve as a signal peptide directing secretion. A compositionally biased stretch (low complexity) spans 29–46 (SHATSSTHNGSHTSRTTS). The disordered stretch occupies residues 29-51 (SHATSSTHNGSHTSRTTSAQTRS). The Virion surface portion of the chain corresponds to 32 to 750 (TSSTHNGSHT…EGVATFLKNP (719 aa)). N-linked (GlcNAc...) asparagine; by host glycans are attached at residues N37, N68, N73, and N85. 5 disulfides stabilise this stretch: C94–C550, C111–C506, C185–C250, C246–C250, and C344–C391. The involved in fusion and/or binding to host membrane stretch occupies residues 152 to 158 (SYAYIYT). A glycan (N-linked (GlcNAc...) asparagine; by host) is linked at N208. The interval 237–244 (GSTWLYRE) is involved in fusion and/or binding to host membrane. N-linked (GlcNAc...) asparagine; by host glycans are attached at residues N281, N286, N302, N341, N383, N405, N409, N417, N447, N452, N464, N465, N554, and N585. C573 and C610 are joined by a disulfide. Hydrophobic membrane proximal region stretches follow at residues 696–748 (VEDK…TFLK) and 727–747 (VAIG…ATFL). Residues 751–771 (FGAFTIILVAIAVVIITYLIY) form a helical membrane-spanning segment. Topologically, residues 772-906 (TRQRRLCTQP…LKDSDEEENV (135 aa)) are intravirion. Polar residues-rich tracts occupy residues 797 to 809 (VTSG…SLQA) and 859 to 876 (RAQQ…GTQD). Disordered regions lie at residues 797–837 (VTSG…TAAP) and 856–906 (AEQR…EENV). Residues 877 to 886 (KGQKPNLLDR) are compositionally biased toward basic and acidic residues. The Internalization motif motif lies at 894–897 (YRHL).

The protein belongs to the herpesviridae glycoprotein B family. Homotrimer; disulfide-linked. Binds to heparan sulfate proteoglycans. Interacts with gH/gL heterodimer. Interacts with host TLR1 and TLR2. Interacts with host C-type lectin CD209/DC-SIGN. Interacts with host ITGB1, EGFR, and PDGFRA. A proteolytic cleavage by host furin generates two subunits that remain linked by disulfide bonds.

The protein localises to the virion membrane. The protein resides in the host cell membrane. It localises to the host endosome membrane. Its subcellular location is the host Golgi apparatus membrane. Envelope glycoprotein that plays a role in host cell entry, cell to-cell virus transmission, and fusion of infected cells. May be involved in the initial attachment via binding to heparan sulfate together with the gM/gN complex that binds heparin with higher affinity. Interacts with host integrin ITGB1, PDGFRA and EGFR that likely serve as postattachment entry receptors. Also participates in the fusion of viral and cellular membranes leading to virus entry into the host cell. Membrane fusion is mediated by the fusion machinery composed at least of gB and the heterodimer gH/gL. The protein is Envelope glycoprotein B of Human cytomegalovirus (strain AD169) (HHV-5).